A 245-amino-acid polypeptide reads, in one-letter code: Lytic switch protein BZLF1 (245 aa).

The transactivation stretch occupies residues 1–167 (MMDPNSTSED…RTRKPQQPES (167 aa)). Residues T14 and T159 each carry the phosphothreonine; by host modification. Positions 157–194 (RRTRKPQQPESLEECDSELEIKRYKNRVASRKCRAKFK) match the Bipartite nuclear localization signal motif. 3 positions are modified to phosphoserine; by host: S167, S173, and S186. In terms of domain architecture, bZIP spans 170–228 (ECDSELEIKRYKNRVASRKCRAKFKQLLQHYREVAAAKSSENDRLRLLLKQMCPSLDVD). Positions 178–195 (KRYKNRVASRKCRAKFKQ) are basic motif. The segment at 196-228 (LLQHYREVAAAKSSENDRLRLLLKQMCPSLDVD) is leucine-zipper. An accessory activation domain region spans residues 229–245 (SIIPRTPDVLHEDLLNF).

This sequence belongs to the bZIP family. As to quaternary structure, homodimer. Interacts (via b-ZIP domain) with the DNA polymerase processivity factor BMRF1 (via N-terminus); this interaction may inhibit BZLF1-induced transcription of the BMRF1 promoter. Interacts with human UBN1, CRTC2 and RACK1. Interacts (via N-terminus) with human PAX5 (via N-terminus); this interaction inhibits BZLF1-mediated lytic viral reactivation. Interacts (via leucine-zipper domain) with host CEBPA; this interaction induces G1 host cell cycle arrest. Interacts (via C-terminus) with host TP53BP1 (via C-terminus); this interaction is involved in the activation of the viral lytic cycle. Interacts with host chromatin-remodeling ATPase INO80; this interaction participates to the activation of early lytic viral genes by BZLF1. Interacts with host regulator of chromatin SMARCA5/hSNF2H; this interaction participates to the activation of early lytic viral genes by BZLF1. Interacts with host PLSCR1/Phospholipid scramblase 1; this interaction negatively regulates the transcriptional regulatory activity of BZLF1 by preventing the formation of the BZLF1-CBP complex.

It is found in the host nucleus. In terms of biological role, transcription factor that acts as a molecular switch to induce the transition from the latent to the lytic or productive phase of the virus cycle. Mediates the switch from the latent to the lytic cycle of infection in cells containing a highly methylated viral genome. Probably binds to silenced chromatin and recruits host chromatin-remodeling enzymes. Regulates this switch by binding to 2 types of ZEBRA response elements (ZREs): the CpG-free AP-1 like elements (latency) and the methylated CpG-containing elements (lytic replication). Activates preferentially the methylated forms of the viral lytic R (BRLF1) and Na (BRRF1) gene promoters, the latters being the first genes activated during Z-mediated reactivation in latently infected cells. BZLF1 and BRLF1 act together to trigger lytic replication. Also binds the lytic origin of replication, oriLyt. Induces G1 cell cycle arrest by stabilizing the host CCAAT/enhancer binding protein CEBPA. This function is important because the lytic cycle preferentially takes place in host cells arrested in G1. The polypeptide is Lytic switch protein BZLF1 (Epstein-Barr virus (strain B95-8) (HHV-4)).